Reading from the N-terminus, the 259-residue chain is Ribosomal RNA small subunit methyltransferase J (259 aa).

S-adenosyl-L-methionine-binding positions include 101 to 102, 117 to 118, 153 to 154, and D176; these read RD, ER, and SS.

It belongs to the methyltransferase superfamily. RsmJ family.

The protein resides in the cytoplasm. The catalysed reaction is guanosine(1516) in 16S rRNA + S-adenosyl-L-methionine = N(2)-methylguanosine(1516) in 16S rRNA + S-adenosyl-L-homocysteine + H(+). In terms of biological role, specifically methylates the guanosine in position 1516 of 16S rRNA. The chain is Ribosomal RNA small subunit methyltransferase J from Vibrio vulnificus (strain YJ016).